The following is a 246-amino-acid chain: Cell division protein ZapD (246 aa).

The protein belongs to the ZapD family. As to quaternary structure, interacts with FtsZ.

Its subcellular location is the cytoplasm. In terms of biological role, cell division factor that enhances FtsZ-ring assembly. Directly interacts with FtsZ and promotes bundling of FtsZ protofilaments, with a reduction in FtsZ GTPase activity. The protein is Cell division protein ZapD of Vibrio vulnificus (strain CMCP6).